The primary structure comprises 666 residues: 1-deoxy-D-xylulose-5-phosphate synthase (666 aa).

Thiamine diphosphate is bound by residues His-103 and 144–146; that span reads AHS. Asp-175 lines the Mg(2+) pocket. Thiamine diphosphate contacts are provided by residues 176–177, Asn-204, Tyr-314, and Glu-396; that span reads GA. Residue Asn-204 participates in Mg(2+) binding.

It belongs to the transketolase family. DXPS subfamily. In terms of assembly, homodimer. Requires Mg(2+) as cofactor. The cofactor is thiamine diphosphate.

It catalyses the reaction D-glyceraldehyde 3-phosphate + pyruvate + H(+) = 1-deoxy-D-xylulose 5-phosphate + CO2. It participates in metabolic intermediate biosynthesis; 1-deoxy-D-xylulose 5-phosphate biosynthesis; 1-deoxy-D-xylulose 5-phosphate from D-glyceraldehyde 3-phosphate and pyruvate: step 1/1. Functionally, catalyzes the acyloin condensation reaction between C atoms 2 and 3 of pyruvate and glyceraldehyde 3-phosphate to yield 1-deoxy-D-xylulose-5-phosphate (DXP). This chain is 1-deoxy-D-xylulose-5-phosphate synthase, found in Nitrobacter winogradskyi (strain ATCC 25391 / DSM 10237 / CIP 104748 / NCIMB 11846 / Nb-255).